Here is a 436-residue protein sequence, read N- to C-terminus: MTQLQSLRGMVDLLPEQTRCWQAVESVARDHFRRAGLQEIRTPLLEVTELFARGIGEATDVVGKEMYTFVDRGDRSCTLRPEGTASVVRAALQHGLLSQGPQRLWYGGPMFRYERPQAGRQRQFYQIGVEYLGVGSPRSDAEVIALAWALLVDLGVQGLVLEINSLGTLQDRQKYREELVAWLEARSDQLDDDSRKRLYTNPLRILDSKNPAISELLQDAPTLFEALSVESKARFEEVQVDLEALQIPFQLNPRLVRGLDYYGHTAFEITSDQLGAQATVCGGGRYDGLVEQLGGAPTPAFGWAFGMERLMLLLESAASINPNGSAARLTASTRPDLYVVNRGEQAERVALVIAHQLRAAGLVVELDSSGSAFNKQFKRAGRSRATWALVIGDDEAERGEARLKYLQEATTQANPIPIDQLHRLDDVTGLVRLVRE.

Belongs to the class-II aminoacyl-tRNA synthetase family. As to quaternary structure, homodimer.

It is found in the cytoplasm. It carries out the reaction tRNA(His) + L-histidine + ATP = L-histidyl-tRNA(His) + AMP + diphosphate + H(+). The sequence is that of Histidine--tRNA ligase from Prochlorococcus marinus (strain MIT 9303).